Reading from the N-terminus, the 614-residue chain is Zinc finger protein ztf-7 (614 aa).

Residues 1–10 are compositionally biased toward gly residues; sequence MSTSGSGGGN. The disordered stretch occupies residues 1–160; sequence MSTSGSGGGN…SRPKKPEKMS (160 aa). A compositionally biased stretch (polar residues) spans 18-41; sequence NVASSPNANPKKNADTESSGGSKN. Residues 54-69 are compositionally biased toward low complexity; the sequence is GSNSRNGSRTNSVSNS. The segment covering 74-83 has biased composition (basic and acidic residues); it reads NRKDWTDRKS. Residues 132 to 150 show a composition bias toward acidic residues; that stretch reads DYSDEYELDEPFSDSDDED. 2 consecutive C2H2-type zinc fingers follow at residues 356–380 and 447–470; these read NECI…KRNH and VVCL…KTTH.

The protein belongs to the ZNF277 family. Interacts with rps-2.

The protein localises to the cytoplasm. In terms of biological role, probable transcription factor. Limits the ability to tolerate cold environment or cold-warm stress. In complex with rps-2, mediates the cold-warm shock response by promoting translocation of components of the RNA exosome from the nucleolus to nucleoplasm. In Caenorhabditis elegans, this protein is Zinc finger protein ztf-7.